Here is a 701-residue protein sequence, read N- to C-terminus: Sulfate anion transporter 1 (701 aa).

Residues 1–20 (MDESPEPLQQGRGPVPVRRQ) form a disordered region. Transmembrane regions (helical) follow at residues 68–90 (YLAGDVMSGLVIGIILVPQAIAY) and 94–116 (AGLQPIYSLYTSFFANLIYFLMG). N-linked (GlcNAc...) asparagine glycosylation is found at N158 and N163. Transmembrane regions (helical) follow at residues 176-198 (YAIRVATALTLMTGLYQVLMGVL), 255-277 (GAGQANVCDVVTSTVCLAVLLAA), 290-309 (VPLPTELLVIVVATLVSHFG), 342-364 (ALDAVALALVAAAFSISLAEMFA), 377-399 (LLAVGCCNVLPAFLHCFATSAAL), 412-434 (TQLSSVVSATVVLLVLLALAPLF), and 472-494 (LVWAGTAATCMLVSTEAGLLAGV). The region spanning 527 to 687 (EFEGLVPEPG…LSVHDAVQTA (161 aa)) is the STAS domain.

This sequence belongs to the SLC26A/SulP transporter (TC 2.A.53) family. In terms of tissue distribution, expressed most abundantly in the kidney and liver, with lower levels in the pancreas, testis, brain, small intestine, colon, and lung.

Its subcellular location is the cell membrane. The protein resides in the basolateral cell membrane. The catalysed reaction is thiosulfate(in) + sulfate(out) = thiosulfate(out) + sulfate(in). It carries out the reaction 2 hydrogencarbonate(out) + sulfate(in) = 2 hydrogencarbonate(in) + sulfate(out). It catalyses the reaction oxalate(in) + sulfate(out) = oxalate(out) + sulfate(in). The enzyme catalyses oxalate(in) + 2 hydrogencarbonate(out) = oxalate(out) + 2 hydrogencarbonate(in). Sodium-independent sulfate anion transporter. Can transport other anions including bicarbonate, thiosulfate and oxalate by mediating sulfate-thiosulfate, sulfate-hydrogencarbonate and sulfate-oxalate anion exchange. Mediates oxalate-hydrogencarbonate anion exchange. The chain is Sulfate anion transporter 1 (SLC26A1) from Homo sapiens (Human).